The primary structure comprises 436 residues: EPS I polysaccharide export inner membrane protein EpsE (436 aa).

12 helical membrane passes run 20–40, 49–69, 91–111, 133–153, 160–180, 185–205, 234–254, 261–281, 307–327, 341–361, 375–395, and 396–416; these read VLGL…NILL, FGLF…LATG, LCAF…ALYL, AAIV…QYAM, ATIS…MGPI, LALT…LLVL, VLTT…LAAM, LALF…PATL, ALLF…LLAG, AASS…SVLL, FAMA…ALRL, and GFGA…LILF.

This sequence to E.coli bicyclomycin resistance protein (BCR).

The protein resides in the cell inner membrane. Its function is as follows. Probably involved in polymerization and/or export of exopolysaccharide EPS I which functions as a virulence factor. May play a role in export of EPS I or its intermediates across the membranes. This Ralstonia solanacearum (Pseudomonas solanacearum) protein is EPS I polysaccharide export inner membrane protein EpsE (epsE).